Reading from the N-terminus, the 377-residue chain is Lactosylceramide 1,3-N-acetyl-beta-D-glucosaminyltransferase (377 aa).

Residues 1–12 lie on the Cytoplasmic side of the membrane; it reads MLISARRLRRCQ. A helical; Signal-anchor for type II membrane protein transmembrane segment spans residues 13-30; it reads FFQLLTSCFVLSLMALLV. The Lumenal portion of the chain corresponds to 31-377; sequence QEDNSLINHV…DTYPCSAAWS (347 aa). 3 N-linked (GlcNAc...) asparagine glycosylation sites follow: N56, N167, and N275.

The protein belongs to the glycosyltransferase 31 family.

Its subcellular location is the golgi apparatus membrane. It catalyses the reaction a beta-D-Gal-(1-&gt;4)-beta-D-Glc-(1&lt;-&gt;1)-Cer(d18:1(4E)) + UDP-N-acetyl-alpha-D-glucosamine = a beta-D-GlcNAc-(1-&gt;3)-beta-D-Gal-(1-&gt;4)-beta-D-Glc-(1&lt;-&gt;1)-Cer(d18:1(4E)) + UDP + H(+). The catalysed reaction is a neolactoside nLc4Cer(d18:1(4E)) + UDP-N-acetyl-alpha-D-glucosamine = a neolactoside IV(3)-beta-GlcNAc-nLc4Cer(d18:1(4E)) + UDP + H(+). The protein operates within protein modification; protein glycosylation. Beta-1,3-N-acetylglucosaminyltransferase that plays a key role in the synthesis of lacto- or neolacto-series carbohydrate chains on glycolipids. The chain is Lactosylceramide 1,3-N-acetyl-beta-D-glucosaminyltransferase (b3gnt5) from Xenopus tropicalis (Western clawed frog).